The primary structure comprises 690 residues: ATP-dependent DNA helicase Hel308 (690 aa).

Residues Gln26 and 45–52 (IPTASGKT) each bind ATP. One can recognise a Helicase ATP-binding domain in the interval 32–188 (AGYLESEDNY…WLDARVVEHD (157 aa)). Residues 133–136 (DEFH) carry the DEAH box motif. The 210-residue stretch at 208-417 (EKNDVVLKVL…NRDALYRQII (210 aa)) folds into the Helicase C-terminal domain.

This sequence belongs to the helicase family. Hel308 subfamily. Monomer. Binds replication protein A (RPA), in presence and absence of DNA.

The catalysed reaction is Couples ATP hydrolysis with the unwinding of duplex DNA by translocating in the 3'-5' direction.. It catalyses the reaction ATP + H2O = ADP + phosphate + H(+). Functionally, DNA-dependent ATPase and 3'-5' DNA helicase that may be involved in repair of stalled replication forks. Helicase with 3'-to 5'- polarity; able to unwind over 100 bp of DNA at 50 degrees Celsius. Unwinds forked DNA, preferentially on lagging strand forks; has weaker activity on Holliday junctions. Displaces the invading strand in DNA D-loops. Unwinds short oligonucleotides from dsDNA with 3'- but not blunt ends or 5'-ssDNA tails in an ATP-dependent manner. ATPase activity is stimulated by ssDNA but not dsDNA, protein binds ssDNA, dsDNA with 5'- or 3'-overhangs but not blunt ended dsDNA and replication forks. Replication forks bind both this protein and RPA. RPA does not stimulate the helicase activity of this protein. The protein is ATP-dependent DNA helicase Hel308 of Methanothermobacter thermautotrophicus (strain ATCC 29096 / DSM 1053 / JCM 10044 / NBRC 100330 / Delta H) (Methanobacterium thermoautotrophicum).